Consider the following 382-residue polypeptide: Apolipoprotein A-IV (382 aa).

The signal sequence occupies residues 1–20; sequence MFLKAVVLTLSLVAVTGAQA. Tandem repeats lie at residues 33 to 54, 60 to 81, 82 to 103, 115 to 136, 137 to 158, 159 to 180, 181 to 202, 203 to 224, 225 to 246, 247 to 268, 269 to 286, 287 to 308, and 309 to 330. Residues 33 to 330 are 13 X 22 AA approximate tandem repeats; that stretch reads DYFSQLSNNA…QVEELRQKLG (298 aa).

Belongs to the apolipoprotein A1/A4/E family. As to quaternary structure, homodimer. Post-translationally, phosphorylation sites are present in the extracellular medium.

Its subcellular location is the secreted. Its function is as follows. May have a role in chylomicrons and VLDL secretion and catabolism. Required for efficient activation of lipoprotein lipase by ApoC-II; potent activator of LCAT. Apoa-IV is a major component of HDL and chylomicrons. The sequence is that of Apolipoprotein A-IV (APOA4) from Mirounga angustirostris (Northern elephant seal).